Reading from the N-terminus, the 354-residue chain is UDP-N-acetylglucosamine--N-acetylmuramyl-(pentapeptide) pyrophosphoryl-undecaprenol N-acetylglucosamine transferase (354 aa).

UDP-N-acetyl-alpha-D-glucosamine is bound by residues 15–17, N127, R163, S191, I244, 263–268, and Q288; these read TGG and ALTVSE.

Belongs to the glycosyltransferase 28 family. MurG subfamily.

It is found in the cell inner membrane. It carries out the reaction di-trans,octa-cis-undecaprenyl diphospho-N-acetyl-alpha-D-muramoyl-L-alanyl-D-glutamyl-meso-2,6-diaminopimeloyl-D-alanyl-D-alanine + UDP-N-acetyl-alpha-D-glucosamine = di-trans,octa-cis-undecaprenyl diphospho-[N-acetyl-alpha-D-glucosaminyl-(1-&gt;4)]-N-acetyl-alpha-D-muramoyl-L-alanyl-D-glutamyl-meso-2,6-diaminopimeloyl-D-alanyl-D-alanine + UDP + H(+). Its pathway is cell wall biogenesis; peptidoglycan biosynthesis. Functionally, cell wall formation. Catalyzes the transfer of a GlcNAc subunit on undecaprenyl-pyrophosphoryl-MurNAc-pentapeptide (lipid intermediate I) to form undecaprenyl-pyrophosphoryl-MurNAc-(pentapeptide)GlcNAc (lipid intermediate II). This Vibrio cholerae serotype O1 (strain ATCC 39315 / El Tor Inaba N16961) protein is UDP-N-acetylglucosamine--N-acetylmuramyl-(pentapeptide) pyrophosphoryl-undecaprenol N-acetylglucosamine transferase.